The primary structure comprises 212 residues: Ribosomal RNA small subunit methyltransferase G (212 aa).

S-adenosyl-L-methionine contacts are provided by residues Phe-78, 96-98 (ESS), 124-125 (VE), and Arg-141.

It belongs to the methyltransferase superfamily. RNA methyltransferase RsmG family.

The protein resides in the cytoplasm. In terms of biological role, specifically methylates the N7 position of a guanine in 16S rRNA. This is Ribosomal RNA small subunit methyltransferase G from Onion yellows phytoplasma (strain OY-M).